The following is a 773-amino-acid chain: Immunoglobulin domain and leucine-rich repeat-containing protein 2 (773 aa).

The first 20 residues, Met-1–Ser-20, serve as a signal peptide directing secretion. Over Gln-21 to Ser-493 the chain is Extracellular. LRR repeat units lie at residues Thr-52–Gly-73, Ser-74–Pro-96, Phe-97–Pro-120, Leu-122–Ile-144, Phe-145–Asn-167, and Thr-168–Val-191. An N-linked (GlcNAc...) asparagine glycan is attached at Asn-114. Asn-204 carries an N-linked (GlcNAc...) asparagine glycan. LRR repeat units follow at residues Ser-206–Phe-230, Leu-233–Ala-251, Pro-252–Pro-275, and Pro-296–Met-319. Residues Pro-349–Arg-479 enclose the Ig-like domain. N-linked (GlcNAc...) asparagine glycosylation is found at Asn-361 and Asn-379. Cys-396 and Cys-463 are oxidised to a cystine. Residues Val-494–Ile-514 traverse the membrane as a helical segment. Residues Thr-515–Arg-773 are Cytoplasmic-facing. The segment at Val-725–Arg-773 is disordered. A compositionally biased stretch (polar residues) spans Asn-733–Thr-745. A compositionally biased stretch (low complexity) spans Ser-746–His-763. A compositionally biased stretch (basic and acidic residues) spans Arg-764–Arg-773.

It localises to the membrane. This chain is Immunoglobulin domain and leucine-rich repeat-containing protein 2, found in Caenorhabditis elegans.